We begin with the raw amino-acid sequence, 411 residues long: Pre-mRNA-splicing factor dre4 (411 aa).

A WW 1 domain is found at 3 to 36 (QPLPPGWTEHKAPSGIPYYWNAELKKSTYQRPSF). The tract at residues 65–84 (NAEERKNSRDLRKQLPDRPK) is disordered. Residues 66 to 83 (AEERKNSRDLRKQLPDRP) show a composition bias toward basic and acidic residues. The region spanning 89 to 122 (IPNNDSWVVVFTKKNRYFFHNLKSHESYWEPPLE) is the WW 2 domain. Residues 138 to 209 (ISKDSSQSQN…KSHSAEELEF (72 aa)) are disordered. Positions 140 to 151 (KDSSQSQNVDSG) are enriched in polar residues. Residues 152–166 (KTNHEEIHESRHLQT) are compositionally biased toward basic and acidic residues. The segment covering 167-179 (EIEEPSGLEESSE) has biased composition (acidic residues). One can recognise an FF domain in the interval 239-293 (TDDARRVFTELLKDKNIGAYQPWELVYPKLLDDDRFYVLDSGERRKEVFEEYCKS).

In terms of assembly, component of the spliceosomal complex. Interacts with prp19.

Its subcellular location is the nucleus. In terms of biological role, component of the spliceosome involved in mRNA processing. This chain is Pre-mRNA-splicing factor dre4 (dre4), found in Schizosaccharomyces pombe (strain 972 / ATCC 24843) (Fission yeast).